The following is a 491-amino-acid chain: uncharacterized protein (491 aa).

12 helical membrane-spanning segments follow: residues 48–68 (LILV…VAPC), 85–105 (ALIL…SAPL), 112–132 (RMLL…CGLA), 140–160 (IFRF…SGTI), 174–194 (AVMS…SGFI), 202–222 (WIFW…LPLL), 277–297 (PIVI…YLVL), 317–337 (LNYI…GIFI), 358–378 (VPVI…YGWT), 383–403 (THWI…MLGW), 408–428 (TYLI…ACCV), and 455–475 (LLAF…WFGG).

It belongs to the major facilitator superfamily.

Its subcellular location is the membrane. This is an uncharacterized protein from Schizosaccharomyces pombe (strain 972 / ATCC 24843) (Fission yeast).